A 1195-amino-acid polypeptide reads, in one-letter code: Protein PIP82 (1195 aa).

The span at 1–10 (MSHQEQQFQH) shows a compositional bias: low complexity. Disordered stretches follow at residues 1 to 55 (MSHQ…IGSS), 85 to 132 (KLRG…SQQF), 291 to 471 (NTFD…TANL), 493 to 515 (KVAK…GASG), 544 to 567 (QRNA…GHEP), 613 to 637 (EEDN…GIAT), 702 to 771 (MSPV…IVPK), 833 to 977 (SAGS…VKTS), and 1060 to 1195 (QITV…VVEI). Residues 11–26 (YPHHQHHHHHHHHHIH) are compositionally biased toward basic residues. The span at 37-50 (RSSDLEPNRSRNTD) shows a compositional bias: basic and acidic residues. Low complexity predominate over residues 109 to 118 (GSAKDGAGAA). Polar residues predominate over residues 119 to 132 (QQTHLQVAGQSQQF). The span at 300–313 (HEQFERGKISHETD) shows a compositional bias: basic and acidic residues. Positions 351–360 (QQAAAEESPQ) are enriched in low complexity. Residues 361–371 (ANPPPPPPPRP) show a composition bias toward pro residues. A phospho-regulated basic and hydrophobic (PRBH) motif region spans residues 400–450 (ETTKTAENADENNASRKLSIRQNIKRLRKSIKRPSKIKSKAAAPVPDSDEE). Residues 422-438 (NIKRLRKSIKRPSKIKS) show a composition bias toward basic residues. The span at 494–505 (VAKEPEELETKA) shows a compositional bias: basic and acidic residues. Positions 545 to 560 (RNANNQNATTSKQPKP) are enriched in polar residues. 2 stretches are compositionally biased toward polar residues: residues 732–742 (SGPQKSMSYSP) and 856–867 (RVQSPQIGNSRE). The segment covering 872 to 891 (QEEEDKEAERDSEEEEEERD) has biased composition (acidic residues). Pro residues-rich tracts occupy residues 898-910 (SESP…PQRR) and 925-939 (VPPP…PPPS). Residues 940–968 (VETIPSVASLPSPAPVTRSMAQRSASMSR) show a composition bias toward low complexity. A compositionally biased stretch (polar residues) spans 1075 to 1085 (QSDQSDQSAHQ). A compositionally biased stretch (basic and acidic residues) spans 1086–1095 (EITDTRKTKS). Polar residues predominate over residues 1102-1111 (RQNSNCSRSE). 2 stretches are compositionally biased toward low complexity: residues 1114–1149 (SPLS…QNPS) and 1179–1195 (SYYS…VVEI).

Phosphorylated by aPKC which lowers lipid affinity and promotes dissociation from the cell cortex. In the photoreceptor cells, aPKC-mediated phosphorylation leads to its displacement from the stalk apical cortex and thus restricts its localization to the rhabdomeric apical cortex where it functions. Dephosphorylation appears to be light-dependent. In terms of tissue distribution, restricted to photoreceptor cells (at protein level). Not detected until approximately 48hrs after puparium formation (APF) and then maintained in the photoreceptor cells post-eclosion (at protein level).

The protein localises to the cytoplasm. It localises to the cell cortex. Its subcellular location is the cytosol. It is found in the cell projection. The protein resides in the rhabdomere. Required for the morphological differentiation and maintenance of the rhabdomeric photoreceptor apical domain. Acts as a downstream component of the gl and Pph13 transcriptional pathway which is required for photoreceptor cell development. Likely to function by regulating the trafficking or retention of rhabdomeric proteins including the phototransduction proteins ninaE and didum. This is Protein PIP82 from Drosophila melanogaster (Fruit fly).